The following is a 246-amino-acid chain: Sortase B (246 aa).

Residues 5–24 (SFLGKSLTLVVLGVFLFSGW) form a helical membrane-spanning segment.

The protein belongs to the bacterial sortase family. Class B subfamily.

Its subcellular location is the cell membrane. Its function is as follows. Transpeptidase that anchors surface proteins to the cell wall. Recognizes and modifies its substrate by proteolytic cleavage of a C-terminal sorting signal. Following cleavage, a covalent intermediate is formed via a thioester bond between the sortase and its substrate, which is then transferred and covalently attached to the cell wall. Catalyzes a cell wall sorting reaction in which a surface protein with the consensus sorting signal NP(Q/K)(T/S)(N/G/S)(D/A) is cleaved between the fourth and fifth residues, and the fourth position is linked to the cell wall. This is not the major sortase in Listeria, it seems to anchor only 2 proteins, Hbp2 (SvpA) and Hbp1. This is Sortase B from Listeria monocytogenes serovar 1/2a (strain ATCC BAA-679 / EGD-e).